A 224-amino-acid chain; its full sequence is ATP synthase subunit a (224 aa).

A run of 6 helical transmembrane segments spans residues 17–37 (FSLN…IYWL), 72–92 (IFIS…FPYI), 99–119 (LTLT…YGWI), 125–145 (MFAH…MVCI), 166–186 (IAGH…SYIL), and 187–207 (VTFL…VAMI).

It belongs to the ATPase A chain family. F-type ATPases have 2 components, CF(1) - the catalytic core - and CF(0) - the membrane proton channel. CF(1) has five subunits: alpha(3), beta(3), gamma(1), delta(1), epsilon(1). CF(0) has three main subunits: a, b and c.

It localises to the mitochondrion inner membrane. In terms of biological role, mitochondrial membrane ATP synthase (F(1)F(0) ATP synthase or Complex V) produces ATP from ADP in the presence of a proton gradient across the membrane which is generated by electron transport complexes of the respiratory chain. F-type ATPases consist of two structural domains, F(1) - containing the extramembraneous catalytic core and F(0) - containing the membrane proton channel, linked together by a central stalk and a peripheral stalk. During catalysis, ATP synthesis in the catalytic domain of F(1) is coupled via a rotary mechanism of the central stalk subunits to proton translocation. Key component of the proton channel; it may play a direct role in the translocation of protons across the membrane. This Drosophila melanogaster (Fruit fly) protein is ATP synthase subunit a (mt:ATPase6).